The primary structure comprises 68 residues: DNA gyrase inhibitor YacG (68 aa).

Residues C14, C17, C29, and C33 each coordinate Zn(2+).

It belongs to the DNA gyrase inhibitor YacG family. Interacts with GyrB. The cofactor is Zn(2+).

Inhibits all the catalytic activities of DNA gyrase by preventing its interaction with DNA. Acts by binding directly to the C-terminal domain of GyrB, which probably disrupts DNA binding by the gyrase. In Azorhizobium caulinodans (strain ATCC 43989 / DSM 5975 / JCM 20966 / LMG 6465 / NBRC 14845 / NCIMB 13405 / ORS 571), this protein is DNA gyrase inhibitor YacG.